We begin with the raw amino-acid sequence, 128 residues long: Small ribosomal subunit protein uS11 (128 aa).

This sequence belongs to the universal ribosomal protein uS11 family. As to quaternary structure, part of the 30S ribosomal subunit. Interacts with proteins S7 and S18. Binds to IF-3.

Located on the platform of the 30S subunit, it bridges several disparate RNA helices of the 16S rRNA. Forms part of the Shine-Dalgarno cleft in the 70S ribosome. This Wolbachia sp. subsp. Drosophila simulans (strain wRi) protein is Small ribosomal subunit protein uS11.